We begin with the raw amino-acid sequence, 373 residues long: Putative F-box protein At1g76830 (373 aa).

The region spanning 4-49 is the F-box domain; the sequence is ITSFENLPEELKREILLRMSPNSLVTCSRVSKKLASMIRTKSFKEL.

This is Putative F-box protein At1g76830 from Arabidopsis thaliana (Mouse-ear cress).